The following is a 316-amino-acid chain: Beta-ketoacyl-[acyl-carrier-protein] synthase III 1 (316 aa).

Residues C112 and H243 contribute to the active site. The tract at residues Q244–R248 is ACP-binding. Residue N273 is part of the active site.

This sequence belongs to the thiolase-like superfamily. FabH family. As to quaternary structure, homodimer.

The protein resides in the cytoplasm. The catalysed reaction is malonyl-[ACP] + acetyl-CoA + H(+) = 3-oxobutanoyl-[ACP] + CO2 + CoA. It functions in the pathway lipid metabolism; fatty acid biosynthesis. Functionally, catalyzes the condensation reaction of fatty acid synthesis by the addition to an acyl acceptor of two carbons from malonyl-ACP. Catalyzes the first condensation reaction which initiates fatty acid synthesis and may therefore play a role in governing the total rate of fatty acid production. Possesses both acetoacetyl-ACP synthase and acetyl transacylase activities. Its substrate specificity determines the biosynthesis of branched-chain and/or straight-chain of fatty acids. This is Beta-ketoacyl-[acyl-carrier-protein] synthase III 1 from Vibrio cholerae serotype O1 (strain ATCC 39315 / El Tor Inaba N16961).